Consider the following 147-residue polypeptide: Large ribosomal subunit protein uL15 (147 aa).

Residues 1 to 55 (MKLHEIAPQPGSTKRRRRVGRGVSAGQGASCGLGMRGQKSRSGTGTRPGFEGGQM) form a disordered region. Positions 23 to 35 (VSAGQGASCGLGM) are enriched in gly residues.

Belongs to the universal ribosomal protein uL15 family. In terms of assembly, part of the 50S ribosomal subunit.

Its function is as follows. Binds to the 23S rRNA. The sequence is that of Large ribosomal subunit protein uL15 from Microcystis aeruginosa (strain NIES-843 / IAM M-2473).